A 108-amino-acid polypeptide reads, in one-letter code: Thaicobrin (108 aa).

Positions 1–108 constitute a B30.2/SPRY domain; that stretch reads SPPGNWQKAD…IWQKGLWWLG (108 aa).

It belongs to the ohanin/vespryn family. In terms of tissue distribution, expressed by the venom gland.

The protein resides in the secreted. Neurotoxin that produces dose-dependent hypolocomotion and hyperalgesia in mice. May directly act on the central nervous system, as it is 6500-fold more potent when administered intracerebroventricularly than intraperitoneal. The sequence is that of Thaicobrin from Naja kaouthia (Monocled cobra).